A 333-amino-acid polypeptide reads, in one-letter code: 4-hydroxy-3-methylbut-2-enyl diphosphate reductase (333 aa).

Cys-20 lines the [4Fe-4S] cluster pocket. Residues His-49 and His-85 each contribute to the (2E)-4-hydroxy-3-methylbut-2-enyl diphosphate site. Residues His-49 and His-85 each coordinate dimethylallyl diphosphate. Isopentenyl diphosphate contacts are provided by His-49 and His-85. Cys-107 contacts [4Fe-4S] cluster. His-135 provides a ligand contact to (2E)-4-hydroxy-3-methylbut-2-enyl diphosphate. His-135 contributes to the dimethylallyl diphosphate binding site. His-135 contacts isopentenyl diphosphate. Catalysis depends on Glu-137, which acts as the Proton donor. Residue Thr-176 participates in (2E)-4-hydroxy-3-methylbut-2-enyl diphosphate binding. Residue Cys-206 participates in [4Fe-4S] cluster binding. (2E)-4-hydroxy-3-methylbut-2-enyl diphosphate is bound by residues Ser-234, Ser-235, Asn-236, and Ser-279. Dimethylallyl diphosphate-binding residues include Ser-234, Ser-235, Asn-236, and Ser-279. Residues Ser-234, Ser-235, Asn-236, and Ser-279 each contribute to the isopentenyl diphosphate site.

Belongs to the IspH family. [4Fe-4S] cluster serves as cofactor.

It catalyses the reaction isopentenyl diphosphate + 2 oxidized [2Fe-2S]-[ferredoxin] + H2O = (2E)-4-hydroxy-3-methylbut-2-enyl diphosphate + 2 reduced [2Fe-2S]-[ferredoxin] + 2 H(+). The catalysed reaction is dimethylallyl diphosphate + 2 oxidized [2Fe-2S]-[ferredoxin] + H2O = (2E)-4-hydroxy-3-methylbut-2-enyl diphosphate + 2 reduced [2Fe-2S]-[ferredoxin] + 2 H(+). The protein operates within isoprenoid biosynthesis; dimethylallyl diphosphate biosynthesis; dimethylallyl diphosphate from (2E)-4-hydroxy-3-methylbutenyl diphosphate: step 1/1. It participates in isoprenoid biosynthesis; isopentenyl diphosphate biosynthesis via DXP pathway; isopentenyl diphosphate from 1-deoxy-D-xylulose 5-phosphate: step 6/6. In terms of biological role, catalyzes the conversion of 1-hydroxy-2-methyl-2-(E)-butenyl 4-diphosphate (HMBPP) into a mixture of isopentenyl diphosphate (IPP) and dimethylallyl diphosphate (DMAPP). Acts in the terminal step of the DOXP/MEP pathway for isoprenoid precursor biosynthesis. The chain is 4-hydroxy-3-methylbut-2-enyl diphosphate reductase from Rhizobium etli (strain CIAT 652).